A 528-amino-acid chain; its full sequence is Probable serine/threonine-protein kinase DDB_G0282417 (528 aa).

A compositionally biased stretch (low complexity) spans 49–77; it reads NNNNNNNNNNNNNNNNNNNNNNNNNNKNN. Positions 49–84 are disordered; it reads NNNNNNNNNNNNNNNNNNNNNNNNNNKNNNDGDDAA. In terms of domain architecture, Protein kinase spans 136-466; it reads QQNRVLIGEG…ESLINNHQYS (331 aa). Residues 142-150 and Lys-166 contribute to the ATP site; that span reads IGEGHYGKV. Asp-266 (proton acceptor) is an active-site residue.

Belongs to the protein kinase superfamily. Ser/Thr protein kinase family.

It catalyses the reaction L-seryl-[protein] + ATP = O-phospho-L-seryl-[protein] + ADP + H(+). It carries out the reaction L-threonyl-[protein] + ATP = O-phospho-L-threonyl-[protein] + ADP + H(+). The sequence is that of Probable serine/threonine-protein kinase DDB_G0282417 from Dictyostelium discoideum (Social amoeba).